The chain runs to 732 residues: Serine/threonine-protein kinase CBK1 (732 aa).

A disordered region spans residues 111-240; it reads SFDNHLNVDP…STEAANSDMT (130 aa). Residues 119-159 show a composition bias toward polar residues; sequence DPNNTERFTSMDSMNFQPPASTFTQLGNGSSTNLSEISSGQ. The segment covering 160 to 171 has biased composition (low complexity); the sequence is NSLLSNHSVNNL. The segment covering 172–183 has biased composition (polar residues); it reads PTALTSDTSPPV. Over residues 185–221 the composition is skewed to low complexity; sequence QHPQFQPQQQQQQQQPQQQQIFQQQQQQQQQQQQPQQ. The span at 222–240 shows a compositional bias: polar residues; it reads SRAVVNQSVSTEAANSDMT. Residues 281–310 adopt a coiled-coil conformation; sequence HAIERNQRRLELENKIANEDIGSSEERKNR. The region spanning 335-647 is the Protein kinase domain; that stretch reads FHTVKVIGKG…AEEIKQHPFF (313 aa). Residues 341 to 349 and Lys-364 each bind ATP; that span reads IGKGAFGEV. Asp-458 acts as the Proton acceptor in catalysis. The AGC-kinase C-terminal domain occupies 648–730; that stretch reads RGVDWDSIRD…SRFDYLTRKN (83 aa).

Belongs to the protein kinase superfamily. STE Ser/Thr protein kinase family. COT1 subfamily. As to quaternary structure, interacts with MOB2 and BCR1.

It localises to the bud neck. Its subcellular location is the cell tip. The catalysed reaction is L-seryl-[protein] + ATP = O-phospho-L-seryl-[protein] + ADP + H(+). The enzyme catalyses L-threonyl-[protein] + ATP = O-phospho-L-threonyl-[protein] + ADP + H(+). In terms of biological role, serine/threonine-protein kinase required for wild-type hyphal growth and transcriptional regulation of cell-wall-associated genes. Involved in the biofilm formation through phosphorylation of the master regulator of biofilm formation BCR1. The protein is Serine/threonine-protein kinase CBK1 (CBK1) of Candida albicans (strain SC5314 / ATCC MYA-2876) (Yeast).